A 177-amino-acid polypeptide reads, in one-letter code: Ribosome maturation factor RimM (177 aa).

The PRC barrel domain occupies 101-174 (EGEFHLLDLV…WLLLTPPPGL (74 aa)).

This sequence belongs to the RimM family. In terms of assembly, binds ribosomal protein uS19.

It is found in the cytoplasm. An accessory protein needed during the final step in the assembly of 30S ribosomal subunit, possibly for assembly of the head region. Essential for efficient processing of 16S rRNA. May be needed both before and after RbfA during the maturation of 16S rRNA. It has affinity for free ribosomal 30S subunits but not for 70S ribosomes. The protein is Ribosome maturation factor RimM of Synechococcus sp. (strain CC9605).